A 44-amino-acid chain; its full sequence is Phosphatase RapA inhibitor (44 aa).

A propeptide spanning residues 1–39 (MKSKWMSGLLLVAVGFSFTQVMVHAGETANTEGKTFHIA) is cleaved from the precursor.

It belongs to the Phr family. Interacts with RapA and inhibits its interaction with Spo0F. In terms of processing, secreted with a propeptide domain, which is cleaved in the cell wall by the secreted serine proteases subtilisin and Vpr to produce a mature signaling peptide. Contains a predicted signal peptide cleavage site in the N-terminal region, however the propeptide is probably subject to only one processing event, at the N-terminal end of the mature peptide.

It is found in the secreted. Its subcellular location is the cytoplasm. Its activity is regulated as follows. Inhibition of RapA requires a free carboxylate group at the C-terminal end of the PhrA pentapeptide. A free C-terminal carboxylic acid PhrA pentapeptide inhibits RapA phosphatase activity at a 1:1 ratio and is approximately 200 fold more active than a C-terminal amide peptide. In terms of biological role, signaling molecule involved in the regulation of sporulation. Secreted during production, but the mature peptide acts intracellularly, indicating that it needs to be imported into the cell to function. Inhibitor of the RapA phosphatase activity. Does not act on RapB. This chain is Phosphatase RapA inhibitor, found in Bacillus subtilis (strain 168).